The sequence spans 195 residues: Recombination protein RecR (195 aa).

The C4-type zinc-finger motif lies at 54–69 (CTICGSYTEDEICSIC). The Toprim domain occupies 77-172 (ATICVVGFPQ…NITRLASGLP (96 aa)).

Belongs to the RecR family.

Functionally, may play a role in DNA repair. It seems to be involved in an RecBC-independent recombinational process of DNA repair. It may act with RecF and RecO. This Treponema denticola (strain ATCC 35405 / DSM 14222 / CIP 103919 / JCM 8153 / KCTC 15104) protein is Recombination protein RecR.